Consider the following 546-residue polypeptide: CTP synthase (546 aa).

The tract at residues 1 to 266 is amidoligase domain; the sequence is MTTRYIFVTG…DDLVVKRFGL (266 aa). Serine 14 contacts CTP. Serine 14 contributes to the UTP binding site. ATP is bound by residues 15 to 20 and aspartate 72; that span reads SLGKGI. Mg(2+) contacts are provided by aspartate 72 and glutamate 140. Residues 147–149, 187–192, and lysine 223 each bind CTP; these read DIE and KTKPTQ. Residues 187-192 and lysine 223 contribute to the UTP site; that span reads KTKPTQ. 239-241 provides a ligand contact to ATP; sequence KDV. A Glutamine amidotransferase type-1 domain is found at 291-542; the sequence is VIGMVGKYIE…VAAASAHQKR (252 aa). Residue glycine 352 participates in L-glutamine binding. Cysteine 379 acts as the Nucleophile; for glutamine hydrolysis in catalysis. L-glutamine-binding positions include 380–383, glutamate 403, and arginine 470; that span reads LGMQ. Active-site residues include histidine 515 and glutamate 517.

Belongs to the CTP synthase family. As to quaternary structure, homotetramer.

The catalysed reaction is UTP + L-glutamine + ATP + H2O = CTP + L-glutamate + ADP + phosphate + 2 H(+). The enzyme catalyses L-glutamine + H2O = L-glutamate + NH4(+). It carries out the reaction UTP + NH4(+) + ATP = CTP + ADP + phosphate + 2 H(+). It participates in pyrimidine metabolism; CTP biosynthesis via de novo pathway; CTP from UDP: step 2/2. Its activity is regulated as follows. Allosterically activated by GTP, when glutamine is the substrate; GTP has no effect on the reaction when ammonia is the substrate. The allosteric effector GTP functions by stabilizing the protein conformation that binds the tetrahedral intermediate(s) formed during glutamine hydrolysis. Inhibited by the product CTP, via allosteric rather than competitive inhibition. Catalyzes the ATP-dependent amination of UTP to CTP with either L-glutamine or ammonia as the source of nitrogen. Regulates intracellular CTP levels through interactions with the four ribonucleotide triphosphates. This chain is CTP synthase, found in Shewanella sp. (strain ANA-3).